The primary structure comprises 115 residues: MSIKVEWIKFTRLKKCATLLVQLSLLRYRYMVLAYNHKFDCIVVTIYCGCLFWFSNGALFTEGKARDRGRWAKATMKKNYGVKLKIFLFTILLAFETNTFTPYTSTFSHFARGCL.

The signal sequence occupies residues 1 to 34 (MSIKVEWIKFTRLKKCATLLVQLSLLRYRYMVLA). Helical transmembrane passes span 41-60 (CIVV…GALF) and 81-103 (GVKL…FTPY).

The protein localises to the membrane. Its function is as follows. Has a role in meiosis. The polypeptide is Meiotically up-regulated gene 106 protein (mug106) (Schizosaccharomyces pombe (strain 972 / ATCC 24843) (Fission yeast)).